The primary structure comprises 397 residues: Elongation factor Tu (397 aa).

Residues Lys-10–Glu-206 enclose the tr-type G domain. The interval Gly-19–Thr-26 is G1. A GTP-binding site is contributed by Gly-19 to Thr-26. Position 26 (Thr-26) interacts with Mg(2+). The segment at Gly-62–Ser-66 is G2. The tract at residues Asp-83 to Gly-86 is G3. GTP is bound by residues Asp-83–His-87 and Asn-138–Asp-141. The G4 stretch occupies residues Asn-138 to Asp-141. Residues Ser-176 to Leu-178 form a G5 region.

The protein belongs to the TRAFAC class translation factor GTPase superfamily. Classic translation factor GTPase family. EF-Tu/EF-1A subfamily. As to quaternary structure, monomer.

The protein localises to the cytoplasm. It catalyses the reaction GTP + H2O = GDP + phosphate + H(+). In terms of biological role, GTP hydrolase that promotes the GTP-dependent binding of aminoacyl-tRNA to the A-site of ribosomes during protein biosynthesis. This Salinispora arenicola (strain CNS-205) protein is Elongation factor Tu.